The chain runs to 672 residues: Protein OS-9 (672 aa).

The N-terminal stretch at 1–26 is a signal peptide; it reads MAAEVLLSSLLGLLFLGLLLPARLTG. The MRH domain occupies 108-230; that stretch reads APCLLKTKDW…TIRTSRLCPH (123 aa). Cys110 and Cys123 form a disulfide bridge. A mannooligosaccharide derivative-binding residues include Trp117, Trp118, and Gln130. The N-linked (GlcNAc...) asparagine glycan is linked to Asn177. Intrachain disulfides connect Cys181–Cys216 and Cys196–Cys228. The a mannooligosaccharide derivative site is built by Asp182, Arg188, Glu212, and Tyr218. Disordered stretches follow at residues 261–355, 372–452, 511–548, and 637–672; these read RQAE…NVQV, KAAE…LLPS, ENQS…RVRV, and EANK…EFDF. Composition is skewed to basic and acidic residues over residues 263–281, 294–310, 320–338, 372–386, and 394–409; these read AESK…DTDR, PKKE…ESEL, AAAR…HEAA, KAAE…REQP, and PQRE…KDGE. The segment covering 414 to 435 has biased composition (acidic residues); it reads MEEEDGDDEEEEEEEEEDEEEQ. Residues 637–652 are compositionally biased toward basic and acidic residues; that stretch reads EANKERQRQSELESNY. Acidic residues predominate over residues 663–672; the sequence is DTGDLDEFDF.

It belongs to the OS-9 family. In terms of assembly, component of the HRD1 complex, which comprises at least SYNV1/HRD1, DERL1/2, FAM8A1, HERPUD1/HERP, OS9, SEL1L and UBE2J1. FAM8A1 is stabilized by interaction with SYNV1, which prevents its proteasomal degradation. OS9 and UBE2J1 recruitment to the complex may be mediated by SEL1L. Through this complex, may interact with ERLEC1 and HSPA5. Interacts (via C-terminus) with CPNE6 (via second C2 domain); this interaction occurs in a calcium-dependent manner in vitro. Interacts with CREB3. Post-translationally, N-glycosylated. In terms of processing, intramolecular disulfide bonds.

The protein localises to the endoplasmic reticulum lumen. Lectin component of the HRD1 complex, which functions in endoplasmic reticulum (ER) quality control and ER-associated degradation (ERAD). Specifically recognizes and binds improperly folded glycoproteins as well as hyperglycosylated proteins, retain them in the ER, and transfers them to the ubiquitination machinery and promote their degradation. Possible targets include TRPV4 as well as hyperglycosylated HSP90B1. This chain is Protein OS-9 (Os9), found in Mus musculus (Mouse).